The following is a 405-amino-acid chain: 4-hydroxy-3-methylbut-2-en-1-yl diphosphate synthase (ferredoxin) (405 aa).

4 residues coordinate [4Fe-4S] cluster: cysteine 314, cysteine 317, cysteine 348, and glutamate 355.

The protein belongs to the IspG family. [4Fe-4S] cluster serves as cofactor.

The catalysed reaction is (2E)-4-hydroxy-3-methylbut-2-enyl diphosphate + 2 oxidized [2Fe-2S]-[ferredoxin] + H2O = 2-C-methyl-D-erythritol 2,4-cyclic diphosphate + 2 reduced [2Fe-2S]-[ferredoxin] + H(+). It participates in isoprenoid biosynthesis; isopentenyl diphosphate biosynthesis via DXP pathway; isopentenyl diphosphate from 1-deoxy-D-xylulose 5-phosphate: step 5/6. Its function is as follows. Converts 2C-methyl-D-erythritol 2,4-cyclodiphosphate (ME-2,4cPP) into 1-hydroxy-2-methyl-2-(E)-butenyl 4-diphosphate. The chain is 4-hydroxy-3-methylbut-2-en-1-yl diphosphate synthase (ferredoxin) from Prochlorococcus marinus subsp. pastoris (strain CCMP1986 / NIES-2087 / MED4).